A 68-amino-acid chain; its full sequence is MGALAAAIAIGLAALGAGLGNGMIVSKTVEGIARQPELRGALQGTMFIGVALVEAIPIIAAVIAFMVM.

2 consecutive transmembrane segments (helical) span residues 5–25 and 47–67; these read AAAI…GMIV and FIGV…AFMV.

This sequence belongs to the ATPase C chain family. As to quaternary structure, F-type ATPases have 2 components, F(1) - the catalytic core - and F(0) - the membrane proton channel. F(1) has five subunits: alpha(3), beta(3), gamma(1), delta(1), epsilon(1). F(0) has three main subunits: a(1), b(2) and c(10-14). The alpha and beta chains form an alternating ring which encloses part of the gamma chain. F(1) is attached to F(0) by a central stalk formed by the gamma and epsilon chains, while a peripheral stalk is formed by the delta and b chains.

The protein resides in the cell membrane. F(1)F(0) ATP synthase produces ATP from ADP in the presence of a proton or sodium gradient. F-type ATPases consist of two structural domains, F(1) containing the extramembraneous catalytic core and F(0) containing the membrane proton channel, linked together by a central stalk and a peripheral stalk. During catalysis, ATP synthesis in the catalytic domain of F(1) is coupled via a rotary mechanism of the central stalk subunits to proton translocation. Functionally, key component of the F(0) channel; it plays a direct role in translocation across the membrane. A homomeric c-ring of between 10-14 subunits forms the central stalk rotor element with the F(1) delta and epsilon subunits. The polypeptide is ATP synthase subunit c (Oceanobacillus iheyensis (strain DSM 14371 / CIP 107618 / JCM 11309 / KCTC 3954 / HTE831)).